The following is a 1238-amino-acid chain: uncharacterized protein (1238 aa).

Disordered regions lie at residues 1-38 (MSSKRRNKNNKNNNKNNNKNNDNNNNIEQQDDIEDISS), 122-156 (SSTPISQLSPFKTPSPPSSSSSSSQSPLRKPRPSF), 229-439 (PKNN…KNKE), 660-1016 (KNKL…TGAA), 1051-1083 (EEEDDEEEKEQQNNNNNINSNSKNNNVNNKLNS), and 1098-1191 (KKSG…NASR). Low complexity-rich tracts occupy residues 10 to 26 (NKNNNKNNNKNNDNNNN), 129 to 149 (LSPFKTPSPPSSSSSSSQSPL), and 234 to 276 (QIDS…TQSQ). Positions 317 to 343 (ELQNQTQINKSKQDLTNISQKINITTS) are enriched in polar residues. The span at 344–361 (QHDKDDLGEYRMSEKGGG) shows a compositional bias: basic and acidic residues. The segment covering 362 to 372 (DDGDDDDDYDN) has biased composition (acidic residues). The segment covering 383–394 (TNKKQQQQHHHK) has biased composition (basic residues). Positions 395 to 416 (GKEESQSEYYEKEKEKEKEDIA) are enriched in basic and acidic residues. Low complexity-rich tracts occupy residues 417 to 435 (TTRATTTTKSTDNSNNNIN), 678 to 691 (QQQQQQKQQQQQQE), and 712 to 792 (QPSQ…QEKQ). Over residues 793 to 805 (QSQEKHQSQEKHQ) the composition is skewed to basic and acidic residues. Low complexity-rich tracts occupy residues 806 to 859 (SQQS…SQQK) and 882 to 906 (SQSQSDLSQQFLSQSQSQSQSQSQR). Over residues 916 to 927 (ENQDSENLDDTV) the composition is skewed to acidic residues. Polar residues predominate over residues 929–944 (MNYNQIPSTLDHSTLQ). A compositionally biased stretch (basic and acidic residues) spans 966 to 975 (EIERRRRELA). Residues 976-990 (GEDSDEEFEILDEDQ) are compositionally biased toward acidic residues. Low complexity-rich tracts occupy residues 1062–1083 (QNNNNNINSNSKNNNVNNKLNS) and 1108–1121 (SSSSTNFYSSNKKN). Over residues 1123-1133 (PQPTKSVNKPR) the composition is skewed to polar residues. Low complexity predominate over residues 1142 to 1181 (SQNRQKQSEQQQQQPQQQPQLPQQQQQQQQQQQLRQQQNE). Residues 1182-1191 (NTISSLNASR) are compositionally biased toward polar residues.

This is an uncharacterized protein from Dictyostelium discoideum (Social amoeba).